Reading from the N-terminus, the 195-residue chain is Probable GTP-binding protein EngB (195 aa).

The EngB-type G domain occupies 24-195; sequence ELPEIALAGR…EAWDAILEKL (172 aa). GTP is bound by residues 32-39, 59-63, 77-80, 144-147, and 176-178; these read GRSNVGKS, GKTQL, DVPG, TKAD, and FSS. Ser-39 and Thr-61 together coordinate Mg(2+).

The protein belongs to the TRAFAC class TrmE-Era-EngA-EngB-Septin-like GTPase superfamily. EngB GTPase family. Mg(2+) serves as cofactor.

Its function is as follows. Necessary for normal cell division and for the maintenance of normal septation. This chain is Probable GTP-binding protein EngB, found in Streptococcus pneumoniae (strain Hungary19A-6).